Here is a 304-residue protein sequence, read N- to C-terminus: Phospholipase A1 (304 aa).

An intrachain disulfide couples Cys6 to Cys90. The N-linked (GlcNAc...) asparagine glycan is linked to Asn61. The Nucleophile role is filled by Ser140. The active-site Charge relay system is the Asp168. 2 disulfide bridges follow: Cys179-Cys184 and Cys222-Cys231. His233 acts as the Charge relay system in catalysis. Intrachain disulfides connect Cys248/Cys272, Cys249/Cys297, and Cys265/Cys270.

The protein belongs to the AB hydrolase superfamily. Lipase family. As to expression, expressed by the venom gland.

It localises to the secreted. The enzyme catalyses a 1,2-diacyl-sn-glycero-3-phosphocholine + H2O = a 2-acyl-sn-glycero-3-phosphocholine + a fatty acid + H(+). In terms of biological role, catalyzes the hydrolysis of phosphatidylcholine with phospholipase A1 activity. May act as an allergen and induce hemolytic activity. This is Phospholipase A1 from Vespa velutina (Asian yellow-legged hornet).